We begin with the raw amino-acid sequence, 316 residues long: tRNA dimethylallyltransferase (316 aa).

17-24 (GPTASGKT) provides a ligand contact to ATP. 19-24 (TASGKT) serves as a coordination point for substrate. 4 interaction with substrate tRNA regions span residues 42 to 45 (DSAL), 166 to 170 (QRLSR), 247 to 252 (RCVGYR), and 280 to 287 (KRQITWLR).

Belongs to the IPP transferase family. Monomer. It depends on Mg(2+) as a cofactor.

The enzyme catalyses adenosine(37) in tRNA + dimethylallyl diphosphate = N(6)-dimethylallyladenosine(37) in tRNA + diphosphate. Catalyzes the transfer of a dimethylallyl group onto the adenine at position 37 in tRNAs that read codons beginning with uridine, leading to the formation of N6-(dimethylallyl)adenosine (i(6)A). The chain is tRNA dimethylallyltransferase from Shigella dysenteriae serotype 1 (strain Sd197).